A 283-amino-acid chain; its full sequence is Phytanoyl-CoA dioxygenase (283 aa).

2-oxoglutarate-binding positions include Lys99, Met138, 153–155 (HQD), and Trp170. Residues His153 and Asp155 each coordinate Fe cation. His238 provides a ligand contact to Fe cation. 2 residues coordinate 2-oxoglutarate: Ser240 and Arg249.

The protein belongs to the PhyH family. The cofactor is Fe cation. It depends on L-ascorbate as a cofactor.

It catalyses the reaction phytanoyl-CoA + 2-oxoglutarate + O2 = 2-hydroxyphytanoyl-CoA + succinate + CO2. It functions in the pathway lipid metabolism; fatty acid metabolism. In terms of biological role, converts phytanoyl-CoA to 2-hydroxyphytanoyl-CoA. The polypeptide is Phytanoyl-CoA dioxygenase (Arabidopsis thaliana (Mouse-ear cress)).